The primary structure comprises 560 residues: Synaptotagmin-5 (560 aa).

A helical membrane pass occupies residues 2–22; that stretch reads GFIVGVVIGLLVGIAIIIGFV. The SMP-LTD domain occupies 67–249; the sequence is ERQKLTWLNH…WPVRKVIPII (183 aa). Residues 227-523 form a phospholipid binding region; the sequence is EETIRDAVED…YIGRCILTLT (297 aa). C2 domains follow at residues 243–364 and 417–535; these read RKVI…DVWL and TTDE…KDWY. Positions 278, 284, 334, 336, 451, 457, 506, 508, and 513 each coordinate Ca(2+).

It belongs to the synaptotagmin family. Ca(2+) is required as a cofactor.

Its subcellular location is the membrane. Functionally, may be involved in membrane trafficking. In Arabidopsis thaliana (Mouse-ear cress), this protein is Synaptotagmin-5 (SYT5).